The following is a 340-amino-acid chain: Ketol-acid reductoisomerase (NADP(+)) (340 aa).

Residues Met1 to Thr182 form the KARI N-terminal Rossmann domain. NADP(+) is bound by residues Tyr24–Gln27, Arg48, Ser51, Ser53, and Asp83–Gln86. His108 is a catalytic residue. An NADP(+)-binding site is contributed by Gly134. The KARI C-terminal knotted domain maps to Asn183–Ile329. Residues Asp191, Glu195, Glu227, and Glu231 each contribute to the Mg(2+) site. Ser252 serves as a coordination point for substrate.

Belongs to the ketol-acid reductoisomerase family. The cofactor is Mg(2+).

It carries out the reaction (2R)-2,3-dihydroxy-3-methylbutanoate + NADP(+) = (2S)-2-acetolactate + NADPH + H(+). The enzyme catalyses (2R,3R)-2,3-dihydroxy-3-methylpentanoate + NADP(+) = (S)-2-ethyl-2-hydroxy-3-oxobutanoate + NADPH + H(+). The protein operates within amino-acid biosynthesis; L-isoleucine biosynthesis; L-isoleucine from 2-oxobutanoate: step 2/4. It functions in the pathway amino-acid biosynthesis; L-valine biosynthesis; L-valine from pyruvate: step 2/4. Involved in the biosynthesis of branched-chain amino acids (BCAA). Catalyzes an alkyl-migration followed by a ketol-acid reduction of (S)-2-acetolactate (S2AL) to yield (R)-2,3-dihydroxy-isovalerate. In the isomerase reaction, S2AL is rearranged via a Mg-dependent methyl migration to produce 3-hydroxy-3-methyl-2-ketobutyrate (HMKB). In the reductase reaction, this 2-ketoacid undergoes a metal-dependent reduction by NADPH to yield (R)-2,3-dihydroxy-isovalerate. The polypeptide is Ketol-acid reductoisomerase (NADP(+)) (Ruegeria sp. (strain TM1040) (Silicibacter sp.)).